We begin with the raw amino-acid sequence, 328 residues long: Olfactory receptor 13A1 (328 aa).

At 1 to 43 the chain is on the extracellular side; that stretch reads MKLWMESHLIVPETRPSPRMMSNQTLVTEFILQGFSEHPEYRV. The N-linked (GlcNAc...) asparagine glycan is linked to N23. A helical membrane pass occupies residues 44 to 64; the sequence is FLFSCFLFLYSGALTGNVLIT. The Cytoplasmic portion of the chain corresponds to 65 to 72; the sequence is LAITFNPG. The helical transmembrane segment at 73 to 93 threads the bilayer; that stretch reads LHAPMYFFLLNLATMDIICTS. The Extracellular segment spans residues 94–117; the sequence is SIMPKALASLVSEESSISYGGCMA. C115 and C207 are joined by a disulfide. A helical transmembrane segment spans residues 118-138; the sequence is QLYFLTWAASSELLLLTVMAY. Residues 139–157 are Cytoplasmic-facing; that stretch reads DRYAAICHPLHYSSMMSKV. A helical membrane pass occupies residues 158–178; sequence FCSGLATAVWLLCAVNTAIHT. Over 179–215 the chain is Extracellular; the sequence is GLMLRLDFCGPNVIIHFFCEVPPLLLLSCSSTYVNGV. A helical membrane pass occupies residues 216–235; that stretch reads MIVLADAFYGIVNFLMTIAS. The Cytoplasmic segment spans residues 236-255; it reads YGFIVSSILKVKTAWGRQKA. Residues 256-276 traverse the membrane as a helical segment; it reads FSTCSSHLTVVCMYYTAVFYA. Residues 277-289 are Extracellular-facing; the sequence is YISPVSGYSAGKS. The helical transmembrane segment at 290–310 threads the bilayer; it reads KLAGLLYTVLSPTLNPLIYTL. Over 311-328 the chain is Cytoplasmic; sequence RNKEVKAALRKLFPFFRN.

This sequence belongs to the G-protein coupled receptor 1 family.

The protein localises to the cell membrane. In terms of biological role, odorant receptor. This chain is Olfactory receptor 13A1 (OR13A1), found in Homo sapiens (Human).